The chain runs to 384 residues: Probable inactive linolenate hydroperoxide lyase (384 aa).

Heme is bound at residue Cys-346.

The protein belongs to the cytochrome P450 family. Requires heme as cofactor. Expressed in roots, leaves, flowers and siliques.

This chain is Probable inactive linolenate hydroperoxide lyase, found in Arabidopsis thaliana (Mouse-ear cress).